Here is a 258-residue protein sequence, read N- to C-terminus: Exu regulon transcriptional regulator (258 aa).

Residues 7–75 (RRLYQQLAAD…KGSGIHVVSN (69 aa)) enclose the HTH gntR-type domain. Positions 35-54 (ERFIADEKNVSRTVVREAII) form a DNA-binding region, H-T-H motif.

Repressor for the exu regulon that encode genes involved in hexuronate utilization. It regulates the ExuT, UxaCA and UxuRAB operons. Binds D-tagaturonate and D-fructuronate as inducers. The polypeptide is Exu regulon transcriptional regulator (exuR) (Escherichia coli O157:H7).